The following is a 460-amino-acid chain: NADH-quinone oxidoreductase subunit N (460 aa).

13 helical membrane-spanning segments follow: residues 2 to 22, 28 to 48, 65 to 85, 104 to 124, 155 to 175, 196 to 216, 230 to 250, 263 to 283, 292 to 312, 321 to 341, 363 to 383, 400 to 420, and 438 to 458; these read LLPE…AVML, IVAN…LKYS, ANIA…MIIY, ILLS…LLLF, FILG…IYGF, LGLV…LSSA, PIAS…AILL, ISYN…ALGA, LMAY…LLRT, LYML…IMLL, IAAA…LAGF, LLAY…LKII, and YGLL…SFII.

It belongs to the complex I subunit 2 family. In terms of assembly, NDH-1 is composed of 14 different subunits. Subunits NuoA, H, J, K, L, M, N constitute the membrane sector of the complex.

The protein localises to the cell inner membrane. The enzyme catalyses a quinone + NADH + 5 H(+)(in) = a quinol + NAD(+) + 4 H(+)(out). Functionally, NDH-1 shuttles electrons from NADH, via FMN and iron-sulfur (Fe-S) centers, to quinones in the respiratory chain. The immediate electron acceptor for the enzyme in this species is believed to be ubiquinone. Couples the redox reaction to proton translocation (for every two electrons transferred, four hydrogen ions are translocated across the cytoplasmic membrane), and thus conserves the redox energy in a proton gradient. This is NADH-quinone oxidoreductase subunit N from Rickettsia bellii (strain RML369-C).